A 760-amino-acid chain; its full sequence is General transcription and DNA repair factor IIH helicase subunit XPD (760 aa).

The Helicase ATP-binding domain occupies 7-283; the sequence is GLLVYFPYDY…KETDEQRLRD (277 aa). 42–49 provides a ligand contact to ATP; the sequence is MPSGTGKT. Cys-116, Cys-134, Cys-155, and Cys-190 together coordinate [4Fe-4S] cluster. Residues 234 to 237 carry the DEAH box motif; it reads DEAH. The segment at 438-637 is mediates interaction with MMS19; that stretch reads MDASLAIKPV…TQSRILKARL (200 aa).

The protein belongs to the helicase family. RAD3/XPD subfamily. Component of the 7-subunit TFIIH core complex composed of XPB/ERCC3, XPD/ERCC2, GTF2H1, GTF2H2, GTF2H3, GTF2H4 and GTF2H5, which is active in NER. The core complex associates with the 3-subunit CDK-activating kinase (CAK) module composed of CCNH/cyclin H, CDK7 and MNAT1 to form the 10-subunit holoenzyme (holo-TFIIH) active in transcription. The interaction with GTF2H2 results in the stimulation of the 5'--&gt;3' helicase activity. Component of the MMXD complex, which includes CIAO1, ERCC2, CIAO2B, MMS19 and SLC25A5. Interacts with CIAO1 and CIAO2B; the interaction WITH CIAO2B is direct. Interacts with ATF7IP. Interacts directly with MMS19. Part of TBP-based Pol II pre-initiation complex (PIC), in which Pol II core assembles with general transcription factors and other specific initiation factors including GTF2E1, GTF2E2, GTF2F1, GTF2F2, TCEA1, ERCC2, ERCC3, GTF2H2, GTF2H3, GTF2H4, GTF2H5, GTF2A1, GTF2A2, GTF2B and TBP; this large multi-subunit PIC complex mediates DNA unwinding and targets Pol II core to the transcription start site where the first phosphodiester bond forms. Mg(2+) is required as a cofactor. The cofactor is [4Fe-4S] cluster. ISGylated.

It is found in the nucleus. Its subcellular location is the cytoplasm. The protein localises to the cytoskeleton. The protein resides in the spindle. It carries out the reaction Couples ATP hydrolysis with the unwinding of duplex DNA at the replication fork by translocating in the 5'-3' direction. This creates two antiparallel DNA single strands (ssDNA). The leading ssDNA polymer is the template for DNA polymerase III holoenzyme which synthesizes a continuous strand.. The catalysed reaction is ATP + H2O = ADP + phosphate + H(+). Functionally, ATP-dependent 5'-3' DNA helicase, component of the general transcription and DNA repair factor IIH (TFIIH) core complex, which is involved in general and transcription-coupled nucleotide excision repair (NER) of damaged DNA and, when complexed to CDK-activating kinase (CAK), involved in transcription by RNA polymerase II. In NER, TFIIH acts by opening DNA around the lesion to allow the excision of the damaged oligonucleotide and its replacement by a new DNA fragment. The ATP-dependent helicase activity of XPD/ERCC2 is required for DNA opening. In transcription, TFIIH has an essential role in transcription initiation. When the pre-initiation complex (PIC) has been established, TFIIH is required for promoter opening and promoter escape. Phosphorylation of the C-terminal tail (CTD) of the largest subunit of RNA polymerase II by the kinase module CAK controls the initiation of transcription. XPD/ERCC2 acts by forming a bridge between CAK and the core-TFIIH complex. Involved in the regulation of vitamin-D receptor activity. As part of the mitotic spindle-associated MMXD complex it plays a role in chromosome segregation. Might have a role in aging process and could play a causative role in the generation of skin cancers. This chain is General transcription and DNA repair factor IIH helicase subunit XPD (Ercc2), found in Mus musculus (Mouse).